Consider the following 815-residue polypeptide: MKSNQERSNECLPPKKREIPATSRSSEEKAPTLPSDNHRVEGTAWLPGNPGGRGHGGGRHGPAGTSVELGLQQGIGLHKALSTGLDYSPPSAPRSVPVATTLPAAYATPQPGTPVSPVQYAHLPHTFQFIGSSQYSGTYASFIPSQLIPPTANPVTSAVASAAGATTPSQRSQLEAYSTLLANMGSLSQTPGHKAEQQQQQQQQQQQQHQHQQQQQQQQQQQQQQHLSRAPGLITPGSPPPAQQNQYVHISSSPQNTGRTASPPAIPVHLHPHQTMIPHTLTLGPPSQVVMQYADSGSHFVPREATKKAESSRLQQAIQAKEVLNGEMEKSRRYGAPSSADLGLGKAGGKSVPHPYESRHVVVHPSPSDYSSRDPSGVRASVMVLPNSNTPAADLEVQQATHREASPSTLNDKSGLHLGKPGHRSYALSPHTVIQTTHSASEPLPVGLPATAFYAGTQPPVIGYLSGQQQAITYAGSLPQHLVIPGTQPLLIPVGSTDMEASGAAPAIVTSSPQFAAVPHTFVTTALPKSENFNPEALVTQAAYPAMVQAQIHLPVVQSVASPAAAPPTLPPYFMKGSIIQLANGELKKVEDLKTEDFIQSAEISNDLKIDSSTVERIEDSHSPGVAVIQFAVGEHRAQVSVEVLVEYPFFVFGQGWSSCCPERTSQLFDLPCSKLSVGDVCISLTLKNLKNGSVKKGQPVDPASVLLKHSKADGLAGSRHRYAEQENGINQGSAQMLSENGELKFPEKMGLPAAPFLTKIEPSKPAATRKRRWSAPESRKLEKSEDEPPLTLPKPSLIPQEVKICIEGRSNVGK.

Basic and acidic residues predominate over residues 1–41; it reads MKSNQERSNECLPPKKREIPATSRSSEEKAPTLPSDNHRVE. The segment at 1–63 is disordered; it reads MKSNQERSNE…GHGGGRHGPA (63 aa). Residue lysine 16 forms a Glycyl lysine isopeptide (Lys-Gly) (interchain with G-Cter in SUMO) linkage. Gly residues predominate over residues 49–61; that stretch reads NPGGRGHGGGRHG. 2 positions are modified to phosphoserine: serine 82 and serine 88. Disordered regions lie at residues 185–270, 329–355, and 397–424; these read GSLS…PVHL, EKSRRYGAPSSADLGLGKAGGKSVPHP, and VQQATHREASPSTLNDKSGLHLGKPGHR. Lysine 194 is covalently cross-linked (Glycyl lysine isopeptide (Lys-Gly) (interchain with G-Cter in SUMO)). The span at 197–226 shows a compositional bias: low complexity; it reads QQQQQQQQQQQQHQHQQQQQQQQQQQQQQH. Phosphoserine is present on residues serine 238 and serine 253. The span at 243–260 shows a compositional bias: polar residues; that stretch reads QQNQYVHISSSPQNTGRT. A self-association region spans residues 494–604; it reads VGSTDMEASG…TEDFIQSAEI (111 aa). Residues 538–815 are interaction with USP7; sequence LVTQAAYPAM…CIEGRSNVGK (278 aa). Residues 540-766 form an RNA-binding region; it reads TQAAYPAMVQ…FLTKIEPSKP (227 aa). Residues 562–693 form the AXH domain; that stretch reads SPAAAPPTLP…SLTLKNLKNG (132 aa). Residues lysine 609, lysine 696, and lysine 745 each participate in a glycyl lysine isopeptide (Lys-Gly) (interchain with G-Cter in SUMO) cross-link. Residues 762-798 are disordered; it reads EPSKPAATRKRRWSAPESRKLEKSEDEPPLTLPKPSL. Residue serine 775 is modified to Phosphoserine. The short motif at 794 to 797 is the Nuclear localization signal element; sequence PKPS.

The protein belongs to the ATXN1 family. Homooligomer. Interacts with CIC. Interacts with ANP32A, PQBP1, UBQLN4, ATXN1L and USP7. Directly interacts with RBPJ; this interaction is disrupted in the presence of Notch intracellular domain. Competes with ATXN1L for RBPJ-binding. Found in a complex with CIC and ATXN1L. In terms of processing, ubiquitinated by UBE3A, leading to its degradation by the proteasome. The presence of expanded poly-Gln repeats in spinocerebellar ataxia 1 (SCA1) patients impairs ubiquitination and degradation, leading to accumulation of ATXN1 in neurons and subsequent toxicity. Phosphorylation at Ser-775 increases the pathogenicity of proteins with an expanded polyglutamine tract. Post-translationally, sumoylation is dependent on nuclear localization and phosphorylation at Ser-775. It is reduced in the presence of an expanded polyglutamine tract. As to expression, widely expressed throughout the body.

It is found in the cytoplasm. The protein resides in the nucleus. Functionally, chromatin-binding factor that repress Notch signaling in the absence of Notch intracellular domain by acting as a CBF1 corepressor. Binds to the HEY promoter and might assist, along with NCOR2, RBPJ-mediated repression. Binds RNA in vitro. May be involved in RNA metabolism. In concert with CIC and ATXN1L, involved in brain development. This Homo sapiens (Human) protein is Ataxin-1 (ATXN1).